Consider the following 510-residue polypeptide: 2-isopropylmalate synthase (510 aa).

Residues 4–266 form the Pyruvate carboxyltransferase domain; the sequence is IQVFDTTLRD…ETNLKLDETK (263 aa). Asp-13, His-201, His-203, and Asn-237 together coordinate Mn(2+). The regulatory domain stretch occupies residues 390 to 510; that stretch reads QVETLQLQFV…DTARKDGVVS (121 aa).

The protein belongs to the alpha-IPM synthase/homocitrate synthase family. LeuA type 1 subfamily. As to quaternary structure, homodimer. Requires Mn(2+) as cofactor.

It is found in the cytoplasm. It carries out the reaction 3-methyl-2-oxobutanoate + acetyl-CoA + H2O = (2S)-2-isopropylmalate + CoA + H(+). Its pathway is amino-acid biosynthesis; L-leucine biosynthesis; L-leucine from 3-methyl-2-oxobutanoate: step 1/4. Catalyzes the condensation of the acetyl group of acetyl-CoA with 3-methyl-2-oxobutanoate (2-ketoisovalerate) to form 3-carboxy-3-hydroxy-4-methylpentanoate (2-isopropylmalate). The sequence is that of 2-isopropylmalate synthase from Staphylococcus carnosus (strain TM300).